The chain runs to 364 residues: GMP reductase (364 aa).

Residues 26 to 27, K78, 132 to 134, and 183 to 184 each bind NADP(+); these read SR, DVA, and IG. Positions 184, 186, and 189 each coordinate K(+). The Thioimidate intermediate role is filled by C189. T191 acts as the Proton donor/acceptor in catalysis. R192 is a K(+) binding site. Residues 222–224, 245–246, 271–273, and 289–293 each bind GMP; these read DGG, GG, GMS, and RASEG. NADP(+) contacts are provided by residues M272, 288–289, and 317–320; these read YR and SACT.

This sequence belongs to the IMPDH/GMPR family. GuaC type 1 subfamily. In terms of assembly, homotetramer.

The catalysed reaction is IMP + NH4(+) + NADP(+) = GMP + NADPH + 2 H(+). Catalyzes the irreversible NADPH-dependent deamination of GMP to IMP. It functions in the conversion of nucleobase, nucleoside and nucleotide derivatives of G to A nucleotides, and in maintaining the intracellular balance of A and G nucleotides. The protein is GMP reductase (gmr-1) of Onchocerca volvulus.